The following is a 468-amino-acid chain: MRVVTRFAPSPTGSLHLGGARTALFNWLFARHHKGKFLLRMEDTDKKRSSDVVVQSIIDDMSWLGLQHDGDIVVQSSRAARHVAVARELVELGRAYRCYCSEDEVNEQKLQSEGTGKYFRHVCPWKHLNSTGDLPNKPYVVRLKSPENTTIEFLDGVYGKISVKSDQIDDMVILRSDGTPTYLLAVVVDDHDMEITHIIRGSDHITNTVKQIVLAEAMSWVSPKFFHIPLIHDENGAKLSKRNRAPGIHEYKEQGFLPEALCNYLLRMGWSYQNKEIVSMQEAIALFSMEDVGVSCSCLDYKKLVFLNHHYMGSKSESEILDLLLPILEEKLGGRISEEKLSRLSLGIKQLVERAKTLTDLAEDSLFYVQDVEININPEAVETIQNSKKFLAELLESMSGIHPDMWKKTHLSSQIKEFSKTRNLAMSDVYHFLRASITGRLQSPNISEVMEILGQEMCINRMLSAQEI.

Residues 9 to 19 carry the 'HIGH' region motif; the sequence is PSPTGSLHLGG. The short motif at 238–242 is the 'KMSKS' region element; sequence KLSKR. Lys241 is an ATP binding site.

This sequence belongs to the class-I aminoacyl-tRNA synthetase family. Glutamate--tRNA ligase type 1 subfamily. In terms of assembly, monomer.

The protein resides in the cytoplasm. It catalyses the reaction tRNA(Glu) + L-glutamate + ATP = L-glutamyl-tRNA(Glu) + AMP + diphosphate. Functionally, catalyzes the attachment of glutamate to tRNA(Glu) in a two-step reaction: glutamate is first activated by ATP to form Glu-AMP and then transferred to the acceptor end of tRNA(Glu). The protein is Glutamate--tRNA ligase 2 of Anaplasma phagocytophilum (strain HZ).